A 59-amino-acid polypeptide reads, in one-letter code: Large ribosomal subunit protein uL30 (59 aa).

The protein belongs to the universal ribosomal protein uL30 family. In terms of assembly, part of the 50S ribosomal subunit.

The protein is Large ribosomal subunit protein uL30 of Mycobacterium sp. (strain JLS).